The following is a 1074-amino-acid chain: Insulin receptor substrate 2-A (1074 aa).

Residues Met1–Val64 are disordered. Short sequence motifs (YXXM motif) lie at residues Tyr33–Met36 and Tyr145–Met148. A PH domain is found at Asp63 to Asn168. The IRS-type PTB domain occupies Phe193–Ser297. 3 disordered regions span residues Pro326–Arg370, Cys426–Tyr461, and Ser475–Asp510. Positions Ser347–Gly361 are enriched in polar residues. Composition is skewed to low complexity over residues Cys426 to Ser435 and Ser442 to Gly454. Polar residues predominate over residues Ser475–Gln504. Short sequence motifs (YXXM motif) lie at residues Tyr496–Met499, Tyr592–Met595, Tyr605–Met608, Tyr631–Met634, Tyr663–Met666, and Tyr710–Met713. Residues Thr801–Arg821 are disordered. Positions Ser804–Ser817 are enriched in low complexity. The YXXM motif 9 signature appears at Tyr888–Met891.

Post-translationally, phosphorylated by INSR.

In terms of biological role, potentiates insulin signaling. The chain is Insulin receptor substrate 2-A (irs2-a) from Xenopus laevis (African clawed frog).